Here is a 316-residue protein sequence, read N- to C-terminus: Ribosomal RNA small subunit methyltransferase H (316 aa).

S-adenosyl-L-methionine contacts are provided by residues 42–44 (GGH), Asp62, Phe86, Asp104, and Gln111.

It belongs to the methyltransferase superfamily. RsmH family.

The protein resides in the cytoplasm. The catalysed reaction is cytidine(1402) in 16S rRNA + S-adenosyl-L-methionine = N(4)-methylcytidine(1402) in 16S rRNA + S-adenosyl-L-homocysteine + H(+). Functionally, specifically methylates the N4 position of cytidine in position 1402 (C1402) of 16S rRNA. The protein is Ribosomal RNA small subunit methyltransferase H of Polynucleobacter asymbioticus (strain DSM 18221 / CIP 109841 / QLW-P1DMWA-1) (Polynucleobacter necessarius subsp. asymbioticus).